The chain runs to 126 residues: Phosphoribosyl-AMP cyclohydrolase (126 aa).

A Mg(2+)-binding site is contributed by Asp-82. Cys-83 contacts Zn(2+). Mg(2+) is bound by residues Asp-84 and Asp-86. Zn(2+) contacts are provided by Cys-99 and Cys-106.

This sequence belongs to the PRA-CH family. In terms of assembly, homodimer. It depends on Mg(2+) as a cofactor. The cofactor is Zn(2+).

It is found in the cytoplasm. The enzyme catalyses 1-(5-phospho-beta-D-ribosyl)-5'-AMP + H2O = 1-(5-phospho-beta-D-ribosyl)-5-[(5-phospho-beta-D-ribosylamino)methylideneamino]imidazole-4-carboxamide. The protein operates within amino-acid biosynthesis; L-histidine biosynthesis; L-histidine from 5-phospho-alpha-D-ribose 1-diphosphate: step 3/9. Functionally, catalyzes the hydrolysis of the adenine ring of phosphoribosyl-AMP. This is Phosphoribosyl-AMP cyclohydrolase from Micrococcus luteus (strain ATCC 4698 / DSM 20030 / JCM 1464 / CCM 169 / CCUG 5858 / IAM 1056 / NBRC 3333 / NCIMB 9278 / NCTC 2665 / VKM Ac-2230) (Micrococcus lysodeikticus).